The following is a 408-amino-acid chain: Retron Ec48 reverse transcriptase (408 aa).

Positions 43-269 (EELKAIAELP…EPIKVHGLRV (227 aa)) constitute a Reverse transcriptase domain. Mg(2+) is bound by residues D137, D216, and D217.

It belongs to the bacterial reverse transcriptase family.

It carries out the reaction DNA(n) + a 2'-deoxyribonucleoside 5'-triphosphate = DNA(n+1) + diphosphate. Functionally, reverse transcriptase (RT) component of antiviral defense system retron Ec48, composed of a non-coding RNA (ncRNA), this reverse transcriptase (RT) and the following membrane protein. Expression of this retron confers protection against bacteriophages lambda, T2, T4, T5 and T7. At multiplicity of infection (MOI) of 0.02 cultures grow normally when infected with lambda without collapsing, at MOI 2 cultures enter growth stasis. At MOI 3 cell membranes are permeabilized within 15 minutes of infection but do not lyse, suggesting the phage are not able to finish a replication cycle. Antiviral defense is suppressed by mutations that knockout the lambda gam expression or phage T7 gp5.9 expression; both viral genes inhibit host RecBCD. The Ec48 retron may sense the integrity of the RecBCD enzyme; when RecBCD is perturbed by viral proteins the Ec48 effector (the membrane protein) is activated, leading to abortive infection and bacterial growth arrest. Responsible for synthesis of msDNA-Ec48 (a branched molecule with RNA linked by a 2',5'-phosphodiester bond to ssDNA). The retron transcript serves as primer (from a conserved internal G residue) and template for the reaction, and codes for the RT. This is Retron Ec48 reverse transcriptase from Escherichia coli.